A 316-amino-acid chain; its full sequence is Phosphate acyltransferase (316 aa).

It belongs to the PlsX family. As to quaternary structure, homodimer. Probably interacts with PlsY.

The protein localises to the cytoplasm. The enzyme catalyses a fatty acyl-[ACP] + phosphate = an acyl phosphate + holo-[ACP]. It functions in the pathway lipid metabolism; phospholipid metabolism. Catalyzes the reversible formation of acyl-phosphate (acyl-PO(4)) from acyl-[acyl-carrier-protein] (acyl-ACP). This enzyme utilizes acyl-ACP as fatty acyl donor, but not acyl-CoA. In Chlamydia abortus (strain DSM 27085 / S26/3) (Chlamydophila abortus), this protein is Phosphate acyltransferase.